The following is a 532-amino-acid chain: 2,3-bisphosphoglycerate-independent phosphoglycerate mutase (532 aa).

Mn(2+) is bound by residues Asp-15 and Ser-65. Residue Ser-65 is the Phosphoserine intermediate of the active site. Substrate-binding positions include His-126, 156 to 157, Arg-188, Arg-194, 258 to 261, and Lys-331; these read RD and RPDR. Mn(2+) contacts are provided by Asp-398, His-402, Asp-439, His-440, and His-457.

The protein belongs to the BPG-independent phosphoglycerate mutase family. Monomer. Mn(2+) serves as cofactor.

It catalyses the reaction (2R)-2-phosphoglycerate = (2R)-3-phosphoglycerate. It participates in carbohydrate degradation; glycolysis; pyruvate from D-glyceraldehyde 3-phosphate: step 3/5. Functionally, catalyzes the interconversion of 2-phosphoglycerate and 3-phosphoglycerate. The polypeptide is 2,3-bisphosphoglycerate-independent phosphoglycerate mutase (Synechocystis sp. (strain ATCC 27184 / PCC 6803 / Kazusa)).